The sequence spans 389 residues: MVTVEDVWRAQRARGPATVLAIGTATPPNCVDQSTYPDYYFRITNSEHKVELKEKFKRMCDKSMIKKRYMYLTEEILKENPLVCEYMAPSLDARQDMVVVEVPKLGKEAATKAIKEWGQPKSKITHLVFCTTSGVDMPGADYQLTKLLGLRPSVKRLMMYQQGCFAGGTVLRLAKDLAENNKGARVLVVCSEITAVTFRGPSDTHLDSLVGQSLFGDGAAAIIIGSDPIPEVEKPLFELVSAAQTILPSSDGAIDGHLREVGLTFHLLKDVPRLISMNVEKSLVEAFQPLGISDWNSLFWIAHPGGPAILDQVELKLGLKEEKLRATRHVLSEYGNMSSACVLFILDEMRKKSAEEGLKTTGEGLEWGVLFGFGPGLTVETVVLHSLCT.

Residue Cys-164 is part of the active site.

The protein belongs to the thiolase-like superfamily. Chalcone/stilbene synthases family.

The catalysed reaction is (E)-4-coumaroyl-CoA + 3 malonyl-CoA + 3 H(+) = 2',4,4',6'-tetrahydroxychalcone + 3 CO2 + 4 CoA. The protein operates within secondary metabolite biosynthesis; flavonoid biosynthesis. Functionally, the primary product of this enzyme is 4,2',4',6'-tetrahydroxychalcone (also termed naringenin-chalcone or chalcone) which can under specific conditions spontaneously isomerize into naringenin. This Camellia sinensis (Tea plant) protein is Chalcone synthase 3 (CHS3).